A 287-amino-acid chain; its full sequence is Ribosomal RNA small subunit methyltransferase A (287 aa).

Asn28, Leu30, Gly55, Glu77, Asp103, and Asn123 together coordinate S-adenosyl-L-methionine.

Belongs to the class I-like SAM-binding methyltransferase superfamily. rRNA adenine N(6)-methyltransferase family. RsmA subfamily.

The protein localises to the cytoplasm. The enzyme catalyses adenosine(1518)/adenosine(1519) in 16S rRNA + 4 S-adenosyl-L-methionine = N(6)-dimethyladenosine(1518)/N(6)-dimethyladenosine(1519) in 16S rRNA + 4 S-adenosyl-L-homocysteine + 4 H(+). In terms of biological role, specifically dimethylates two adjacent adenosines (A1518 and A1519) in the loop of a conserved hairpin near the 3'-end of 16S rRNA in the 30S particle. May play a critical role in biogenesis of 30S subunits. The sequence is that of Ribosomal RNA small subunit methyltransferase A from Rhodopseudomonas palustris (strain BisB5).